Consider the following 271-residue polypeptide: Glutamate racemase (271 aa).

Residues 13-14 and 45-46 each bind substrate; these read DS and YG. Cys-77 acts as the Proton donor/acceptor in catalysis. 78 to 79 provides a ligand contact to substrate; sequence NT. Cys-192 (proton donor/acceptor) is an active-site residue. A substrate-binding site is contributed by 193–194; sequence TH.

Belongs to the aspartate/glutamate racemases family.

It carries out the reaction L-glutamate = D-glutamate. The protein operates within cell wall biogenesis; peptidoglycan biosynthesis. Functionally, provides the (R)-glutamate required for cell wall biosynthesis. This is Glutamate racemase from Sinorhizobium medicae (strain WSM419) (Ensifer medicae).